We begin with the raw amino-acid sequence, 298 residues long: Porphobilinogen deaminase (298 aa).

An S-(dipyrrolylmethanemethyl)cysteine modification is found at C239.

It belongs to the HMBS family. As to quaternary structure, monomer. The cofactor is dipyrromethane.

It catalyses the reaction 4 porphobilinogen + H2O = hydroxymethylbilane + 4 NH4(+). It functions in the pathway porphyrin-containing compound metabolism; protoporphyrin-IX biosynthesis; coproporphyrinogen-III from 5-aminolevulinate: step 2/4. Functionally, tetrapolymerization of the monopyrrole PBG into the hydroxymethylbilane pre-uroporphyrinogen in several discrete steps. This Ehrlichia canis (strain Jake) protein is Porphobilinogen deaminase.